A 488-amino-acid polypeptide reads, in one-letter code: MEKSWFNFLFSKGELEYRCELSKSMDSFAPIEKTPISQDRAIYDTDKNLYDWGERSSYYNNVDLLVSSKDIRNFISDDTFFVRDSNKNSYSIYFDIQNQKFEIGNGLSDLEVFFYSYRSSSYLNNRSKSDNDPHYDPSIKDTKYDCNNHINSCIDSYFRSHICIDSHFLSDSKNYNESYIYNLICSKSEKIRESQNCKIRTNMNRSDLIQDFDITQNYNQLWIQCDNCYALIYKKALKLKLNVCEQCGYYLKISSSDRIELSIDPGTWNPMDEDMVSTDPIQFHSREEPYQNRIDSAQKKTGLTDAVQTGTGQLNGIPVALGVMDFQFMGGSMGSVVGEKITRLIEYATTEFLPLILVCSSGGARMQEGSLSLMQMAKISSVLCDYQSSKKLFYISILTSPTTGGVTASFGMLGDIIIAEPYAYIAFAGKRVIEQTLKKAVPEGSQAAESLLRKGLLDAIVPRNLLKGVLTELFQLHAFFPLNKNEIK.

Residues Leu221–Lys488 enclose the CoA carboxyltransferase N-terminal domain. Residues Cys225, Cys228, Cys244, and Cys247 each contribute to the Zn(2+) site. The C4-type zinc finger occupies Cys225–Cys247.

It belongs to the AccD/PCCB family. In terms of assembly, acetyl-CoA carboxylase is a heterohexamer composed of biotin carboxyl carrier protein, biotin carboxylase and 2 subunits each of ACCase subunit alpha and ACCase plastid-coded subunit beta (accD). Requires Zn(2+) as cofactor.

The protein resides in the plastid. It is found in the chloroplast stroma. The enzyme catalyses N(6)-carboxybiotinyl-L-lysyl-[protein] + acetyl-CoA = N(6)-biotinyl-L-lysyl-[protein] + malonyl-CoA. It functions in the pathway lipid metabolism; malonyl-CoA biosynthesis; malonyl-CoA from acetyl-CoA: step 1/1. Functionally, component of the acetyl coenzyme A carboxylase (ACC) complex. Biotin carboxylase (BC) catalyzes the carboxylation of biotin on its carrier protein (BCCP) and then the CO(2) group is transferred by the transcarboxylase to acetyl-CoA to form malonyl-CoA. The sequence is that of Acetyl-coenzyme A carboxylase carboxyl transferase subunit beta, chloroplastic from Aethionema grandiflorum (Persian stone-cress).